Reading from the N-terminus, the 192-residue chain is Fe/S biogenesis protein NfuA (192 aa).

[4Fe-4S] cluster contacts are provided by Cys-149 and Cys-152.

Belongs to the NfuA family. In terms of assembly, homodimer. [4Fe-4S] cluster serves as cofactor.

Its function is as follows. Involved in iron-sulfur cluster biogenesis. Binds a 4Fe-4S cluster, can transfer this cluster to apoproteins, and thereby intervenes in the maturation of Fe/S proteins. Could also act as a scaffold/chaperone for damaged Fe/S proteins. The protein is Fe/S biogenesis protein NfuA of Shewanella sp. (strain ANA-3).